The following is a 376-amino-acid chain: Erythronate-4-phosphate dehydrogenase (376 aa).

The substrate site is built by S45 and T67. D147 is a binding site for NAD(+). R209 is an active-site residue. D233 is a binding site for NAD(+). Residue E238 is part of the active site. H255 acts as the Proton donor in catalysis. G258 serves as a coordination point for NAD(+). A substrate-binding site is contributed by Y259.

It belongs to the D-isomer specific 2-hydroxyacid dehydrogenase family. PdxB subfamily. Homodimer.

It is found in the cytoplasm. It catalyses the reaction 4-phospho-D-erythronate + NAD(+) = (R)-3-hydroxy-2-oxo-4-phosphooxybutanoate + NADH + H(+). It participates in cofactor biosynthesis; pyridoxine 5'-phosphate biosynthesis; pyridoxine 5'-phosphate from D-erythrose 4-phosphate: step 2/5. Functionally, catalyzes the oxidation of erythronate-4-phosphate to 3-hydroxy-2-oxo-4-phosphonooxybutanoate. This chain is Erythronate-4-phosphate dehydrogenase, found in Shewanella sp. (strain ANA-3).